An 87-amino-acid chain; its full sequence is Large ribosomal subunit protein bL31B (87 aa).

It belongs to the bacterial ribosomal protein bL31 family. Type B subfamily. As to quaternary structure, part of the 50S ribosomal subunit.

This is Large ribosomal subunit protein bL31B from Salinispora arenicola (strain CNS-205).